The primary structure comprises 641 residues: MAIGPKPESIIGSYDHPPQAEAQTEVKSAAINGDTSPVSRLKDFATDPWLTSTDQPQPDSTTNVPYSLPDSTQDARILIVGAGYGGLLFAVRLLQSGFTLEDILLVDSAGGFGGTWYWNRYPGLMCDIESYIYMPLLEETKNIPSQKYVSGEELRTHAERIAEKWKLGARTLFRTTVSDLTWDDNKMQWIATASFSSNEKKQGSCTYTINADFAILANGTLSKPKVPDLPGIDDYTGRIFHTARWDYDYTGGSPAIPAMDRLRTKKVGVIGTGSTAVQVIPQLARWAGELTVFQRTPGAVGLQENRETDHAWWRDNVQLAGPEWQRKRCENFNAFITNPYRASLEEEDLVKDGWTKHPSFSVALGGARNLQADFLDLAKKIDKERREIGQQHINSTVRNPATAEALFNPTYGWCKRPCFHQGYFETYNRENVRLVSTPGQGITKFTINGIMWGDKEFELDLIVLATGYDLGSLCPANRARLSIHGRGGLSMSQKWASGPATLHGVMTRGFPNLFFPGTSQAGVTANQSYMFDRAAEHIAYIIQNARPRTAASAVNLKVLVEPSLEAEELWAMETVSRARAFAATKTCSAGSYTISARLGESVDESQMARHMPWGEGMASYVKILEEWRKKGDMDGLEVVYD.

The tract at residues 1–68 (MAIGPKPESI…DSTTNVPYSL (68 aa)) is disordered. A compositionally biased stretch (polar residues) spans 49–68 (WLTSTDQPQPDSTTNVPYSL). Residues 115 to 118 (TWYW), 127 to 128 (DI), and Tyr133 each bind FAD. 125–127 (MCD) provides a ligand contact to NADP(+). Residues 272–278 (TGSTAVQ) and 295–296 (RT) contribute to the NADP(+) site.

This sequence belongs to the FAD-binding monooxygenase family. FAD serves as cofactor.

It carries out the reaction protoaustinoid A + AH2 + O2 = berkeleyone A + A + H2O. Its pathway is secondary metabolite biosynthesis; terpenoid biosynthesis. Its function is as follows. FAD-binding monooxygenase; part of the gene cluster A that mediates the biosynthesis of the fungal meroterpenoid acetoxydehydroaustin. The first step of the pathway is the synthesis of 3,5-dimethylorsellinic acid by the polyketide synthase ausA. 3,5-dimethylorsellinic acid is then prenylated by the polyprenyl transferase ausN. Further epoxidation by the FAD-dependent monooxygenase ausM and cyclization by the probable terpene cyclase ausL lead to the formation of protoaustinoid A. Protoaustinoid A is then oxidized to spiro-lactone preaustinoid A3 by the combined action of the FAD-binding monooxygenases ausB and ausC, and the dioxygenase ausE. Acid-catalyzed keto-rearrangement and ring contraction of the tetraketide portion of preaustinoid A3 by ausJ lead to the formation of preaustinoid A4. The aldo-keto reductase ausK, with the help of ausH, is involved in the next step by transforming preaustinoid A4 into isoaustinone which is in turn hydroxylated by the P450 monooxygenase ausI to form austinolide. The cytochrome P450 monooxygenase ausG then modifies austinolide to austinol. Austinol is further acetylated to austin by the O-acetyltransferase ausP, which spontaneously changes to dehydroaustin. The cytochrome P450 monooxygenase then converts dehydroaustin is into 7-dehydrodehydroaustin. The hydroxylation catalyzed by ausR permits the second O-acetyltransferase ausQ to add an additional acetyl group to the molecule, leading to the formation of acetoxydehydroaustin. Due to genetic rearrangements of the clusters and the subsequent loss of some enzymes, the end product of the Penicillium brasilianum austinoid biosynthesis clusters is acetoxydehydroaustin. The chain is FAD-binding monooxygenase ausB from Penicillium brasilianum.